A 228-amino-acid chain; its full sequence is Ribosomal RNA small subunit methyltransferase G (228 aa).

Residues Gly89, Leu94, 140–141 (VE), and Arg159 each bind S-adenosyl-L-methionine.

Belongs to the methyltransferase superfamily. RNA methyltransferase RsmG family.

It is found in the cytoplasm. It catalyses the reaction guanosine(527) in 16S rRNA + S-adenosyl-L-methionine = N(7)-methylguanosine(527) in 16S rRNA + S-adenosyl-L-homocysteine. Specifically methylates the N7 position of guanine in position 527 of 16S rRNA. The chain is Ribosomal RNA small subunit methyltransferase G from Burkholderia ambifaria (strain MC40-6).